The primary structure comprises 428 residues: 3-phosphoshikimate 1-carboxyvinyltransferase (428 aa).

Residues lysine 23, serine 24, and arginine 28 each contribute to the 3-phosphoshikimate site. Phosphoenolpyruvate is bound at residue lysine 23. 2 residues coordinate phosphoenolpyruvate: glycine 97 and arginine 125. Residues serine 170, serine 171, glutamine 172, serine 198, aspartate 314, asparagine 337, and lysine 341 each contribute to the 3-phosphoshikimate site. Residue glutamine 172 coordinates phosphoenolpyruvate. Aspartate 314 functions as the Proton acceptor in the catalytic mechanism. Arginine 345, arginine 387, and lysine 412 together coordinate phosphoenolpyruvate.

The protein belongs to the EPSP synthase family. In terms of assembly, monomer.

The protein localises to the cytoplasm. The catalysed reaction is 3-phosphoshikimate + phosphoenolpyruvate = 5-O-(1-carboxyvinyl)-3-phosphoshikimate + phosphate. The protein operates within metabolic intermediate biosynthesis; chorismate biosynthesis; chorismate from D-erythrose 4-phosphate and phosphoenolpyruvate: step 6/7. In terms of biological role, catalyzes the transfer of the enolpyruvyl moiety of phosphoenolpyruvate (PEP) to the 5-hydroxyl of shikimate-3-phosphate (S3P) to produce enolpyruvyl shikimate-3-phosphate and inorganic phosphate. This chain is 3-phosphoshikimate 1-carboxyvinyltransferase, found in Yersinia pestis bv. Antiqua (strain Antiqua).